The sequence spans 140 residues: Large ribosomal subunit protein uL14 (140 aa).

Belongs to the universal ribosomal protein uL14 family.

The polypeptide is Large ribosomal subunit protein uL14 (RpL23) (Drosophila melanogaster (Fruit fly)).